Here is a 219-residue protein sequence, read N- to C-terminus: Auxin-responsive protein IAA24 (219 aa).

Residues Leu-24–Leu-28 carry the EAR-like (transcriptional repression) motif. Disordered regions lie at residues Leu-24–Gln-88 and Ala-109–Gly-128. Over residues Ser-60–Ser-71 the composition is skewed to polar residues. Residues Gly-129–Gly-215 enclose the PB1 domain.

It belongs to the Aux/IAA family. Homodimers and heterodimers. As to expression, highly expressed in flowers. Expressed in seedlings.

Its subcellular location is the nucleus. In terms of biological role, aux/IAA proteins are short-lived transcriptional factors that function as repressors of early auxin response genes at low auxin concentrations. This is Auxin-responsive protein IAA24 (IAA24) from Oryza sativa subsp. japonica (Rice).